The chain runs to 751 residues: MLDTVAVAAEDPHHDQPWADLGLKADEYARIREILGRRPTSSELAMYSVMWSEHCSYKSSKVHLKQFSELAEVLAQRQPDAGRLLAGIGENAGVVDIGQGYAVTFKVESHNHPSYVEPYQGAATGVGGIVRDILAMGARPVAVMDPLRFGPLDADDTHRVLPGIVAGVGGYGNCLGLPNIGGEAVFDATYLGNPLVNALCVGVLRHEDLHLAKASGVGNQVILYGARTGGDGIGGVSVLASETFDADGPAKRPSVQVGDPFMEKLLIECTLEIFAAGLVAGIQDLGGAGLSCATSELASAGDGGMHVELDRVPLRDSTLAPEEILMSESQERMMAVVEPDDVAAFLAICAKWDVEAVVVGEVTDTGRLQIDWHGERVVDVPPRSVAHDGPTYHRPFARPAWQDDLQADAAESLPRPGSGDELRKTLLTLVASPNLCDKSWITDQYDRYVRGNTVLAQPSDSGMVRVDEETDLGVALATDCNGRFALLDPYAGAQLALAEAYRNVATGGATPLAISDCLNFGSPEDPAVMWQFAEACRGLKDGCLELGIPVTGGNVSLYNQTGETAILPTPVVAVLGVIEDVTRRTPSAWSTGGERVFLLGETREELSGSEWAHVVHGHLGGLPPQLDLEAERTLAELLHDAVGLVSSAHDLSDGGLAQALVEGALRHGVGVSVEVPDDAFVGLFSESPGRVVVTVPDGAAERLVELAERHGVELTALGVTGGDALVVEGQFEIPLDELRDAWTTTLPAALG.

The active site involves H54. ATP is bound by residues Y57 and K106. E108 is a Mg(2+) binding site. Substrate-binding positions include 109-112 (SHNH) and R131. H110 functions as the Proton acceptor in the catalytic mechanism. Residue D132 participates in Mg(2+) binding. Position 256 (Q256) interacts with substrate. Residue D284 coordinates Mg(2+). 328-330 (ESQ) contacts substrate. 2 residues coordinate ATP: D516 and G553. Residue N554 coordinates Mg(2+). Substrate is bound at residue S556.

This sequence belongs to the FGAMS family. In terms of assembly, monomer. Part of the FGAM synthase complex composed of 1 PurL, 1 PurQ and 2 PurS subunits.

It is found in the cytoplasm. It carries out the reaction N(2)-formyl-N(1)-(5-phospho-beta-D-ribosyl)glycinamide + L-glutamine + ATP + H2O = 2-formamido-N(1)-(5-O-phospho-beta-D-ribosyl)acetamidine + L-glutamate + ADP + phosphate + H(+). It functions in the pathway purine metabolism; IMP biosynthesis via de novo pathway; 5-amino-1-(5-phospho-D-ribosyl)imidazole from N(2)-formyl-N(1)-(5-phospho-D-ribosyl)glycinamide: step 1/2. In terms of biological role, part of the phosphoribosylformylglycinamidine synthase complex involved in the purines biosynthetic pathway. Catalyzes the ATP-dependent conversion of formylglycinamide ribonucleotide (FGAR) and glutamine to yield formylglycinamidine ribonucleotide (FGAM) and glutamate. The FGAM synthase complex is composed of three subunits. PurQ produces an ammonia molecule by converting glutamine to glutamate. PurL transfers the ammonia molecule to FGAR to form FGAM in an ATP-dependent manner. PurS interacts with PurQ and PurL and is thought to assist in the transfer of the ammonia molecule from PurQ to PurL. The sequence is that of Phosphoribosylformylglycinamidine synthase subunit PurL from Nocardioides sp. (strain ATCC BAA-499 / JS614).